A 620-amino-acid polypeptide reads, in one-letter code: Glutathione-regulated potassium-efflux system protein KefC (620 aa).

Helical transmembrane passes span 4-24 (HTLVQALIYLGSAALIVPIAV), 26-46 (LGLGSVLGYLIAGCIIGPWGL), 54-74 (SILHFAEIGVVLMLFIIGLEL), 90-110 (GALQMVICGGLLGLFCMLLGL), 114-134 (VAELIGMTLALSSTAIAMQAM), 149-169 (FAVLLFQDIAAIPLVAMIPLL), 178-198 (MGAFALSALKVAGALVLVVLL), 218-238 (VFSAVALFLVFGFGLLLEEVG), 270-290 (GLLLGLFFIGVGMSIDFGTLL), 294-314 (LRIVILLLGFLIIKIAMLWLI), 327-347 (WFAVLLGQGSEFAFVVFGAAQ), and 359-379 (SLTLAVALSMAATPILLVILN). The RCK N-terminal domain maps to 399 to 518 (QPRVIIAGFG…AGVEKPERET (120 aa)). The segment at 597-620 (GWQGTEEGKHTGNMADEPETKPSS) is disordered.

Belongs to the monovalent cation:proton antiporter 2 (CPA2) transporter (TC 2.A.37) family. KefC subfamily. Homodimer. Interacts with the regulatory subunit KefF.

Its subcellular location is the cell inner membrane. Its function is as follows. Pore-forming subunit of a potassium efflux system that confers protection against electrophiles. Catalyzes K(+)/H(+) antiport. In Escherichia coli O139:H28 (strain E24377A / ETEC), this protein is Glutathione-regulated potassium-efflux system protein KefC.